Reading from the N-terminus, the 670-residue chain is NADH-ubiquinone oxidoreductase chain 5 (670 aa).

15 helical membrane passes run 3–23 (LLIV…GRFL), 36–56 (VSFS…GASA), 76–96 (FLFD…SSLV), 113–133 (FMCY…GDNF), 136–156 (LFLG…FWFT), 178–198 (LALG…STIF), 218–238 (ITLI…QIGL), 250–270 (TPVS…FMIA), 283–303 (LIVI…TGIL), 319–339 (LGYM…FHLM), 340–360 (NHAF…HAMS), 375–395 (FPLT…FPFL), 425–445 (VSVL…FLVP), 461–481 (IPMA…GYLA), and 618–638 (SGSV…FVTF).

It belongs to the complex I subunit 5 family.

It is found in the mitochondrion inner membrane. It carries out the reaction a ubiquinone + NADH + 5 H(+)(in) = a ubiquinol + NAD(+) + 4 H(+)(out). Core subunit of the mitochondrial membrane respiratory chain NADH dehydrogenase (Complex I) that is believed to belong to the minimal assembly required for catalysis. Complex I functions in the transfer of electrons from NADH to the respiratory chain. The immediate electron acceptor for the enzyme is believed to be ubiquinone. The chain is NADH-ubiquinone oxidoreductase chain 5 (ND5) from Triticum aestivum (Wheat).